Consider the following 326-residue polypeptide: Pyruvate dehydrogenase E1 component subunit beta (326 aa).

Residue E59 coordinates thiamine diphosphate.

Heterodimer of an alpha and a beta chain. It depends on thiamine diphosphate as a cofactor.

It catalyses the reaction N(6)-[(R)-lipoyl]-L-lysyl-[protein] + pyruvate + H(+) = N(6)-[(R)-S(8)-acetyldihydrolipoyl]-L-lysyl-[protein] + CO2. Its function is as follows. The pyruvate dehydrogenase complex catalyzes the overall conversion of pyruvate to acetyl-CoA and CO(2). It contains multiple copies of three enzymatic components: pyruvate dehydrogenase (E1), dihydrolipoamide acetyltransferase (E2) and lipoamide dehydrogenase (E3). This chain is Pyruvate dehydrogenase E1 component subunit beta (pdhB), found in Rickettsia conorii (strain ATCC VR-613 / Malish 7).